Here is a 550-residue protein sequence, read N- to C-terminus: Glypican-1 (550 aa).

Positions 1–20 (MRFFPWGFWLLCVASAPARG) are cleaved as a signal peptide. Cystine bridges form between C29–C65, C59–C253, C66–C256, C188–C340, C243–C276, C265–C412, and C269–C398. N-linked (GlcNAc...) asparagine glycosylation is found at N76 and N113. Residue N382 is glycosylated (N-linked (GlcNAc...) asparagine). Disordered stretches follow at residues 475-494 (FQDASDDMSGSGSGDSCPDD) and 502-522 (KSPSTRQPETHAIPKQSGHGV). Over residues 481 to 494 (DMSGSGSGDSCPDD) the composition is skewed to low complexity. Residues S483, S485, and S487 are each glycosylated (O-linked (Xyl...) (heparan sulfate) serine). A lipid anchor (GPI-anchor amidated glycine) is attached at G524. Positions 525–550 (ASSRSLPSAFLLFLSGASIVVQHLWR) are cleaved as a propeptide — removed in mature form.

This sequence belongs to the glypican family. O-glycosylated with heparan sulfate.

It is found in the cell membrane. It localises to the endosome. The protein resides in the secreted. The protein localises to the extracellular space. Cell surface proteoglycan that bears heparan sulfate. Modulates Wnt-signaling pathway. The protein is Glypican-1 (GPC1) of Gallus gallus (Chicken).